A 487-amino-acid polypeptide reads, in one-letter code: MSQLNKWQKELQALQKANYQETDNQLFNVYRQSLIDIKKRLKVYTENAESLSFSTRLEVERLFSVADEINAILQLNSPKVEKTIKGYSAKQAEQGYYGLWYTLEQSQNIALSMPLINHDYIMNLVNAPVAGKRLSKRLYKYRDELAQNVTNNIITGLFEGKSYAEIARWINEETEASYKQALRIARTEAGRTQSVTTQKGYEEAKELGINIKKKWLATIDKHTRRTHQELDGKEVDVDEEFTIRGHSAKGPRMFGVASEDVNCRCTTIEVVDGISPELRKDNESKEMSEFKSYDEWYADRIRQNESKPKPNFTELDFFGQSDLQDDSDKWVAGLKPEQVNAMKDYTSDAFAKMNKILRNEKYNPREKPYLVNIIQNLDDAISKFKLKHDIITYRGVSANEYDAILNGNVFKEFKSTSINKKVAEDFLNFTSANKDGRVVKFLIPKGTQGAYIGTNSSMKKESEFLLNRNLKYTVEIVDNILEVTILG.

A coiled-coil region spans residues 2–51; it reads SQLNKWQKELQALQKANYQETDNQLFNVYRQSLIDIKKRLKVYTENAESL. Positions 315 to 487 constitute a TR mART core domain; the sequence is LDFFGQSDLQ…DNILEVTILG (173 aa). NAD(+)-binding positions include 346-358 and 394-400; these read TSDA…KILR and RGVSANE. Catalysis depends on residues arginine 394, serine 415, and glutamate 463. Position 463 (glutamate 463) interacts with NAD(+).

The protein localises to the secreted. It catalyses the reaction L-arginyl-[protein] + NAD(+) = N(omega)-(ADP-D-ribosyl)-L-arginyl-[protein] + nicotinamide + H(+). A probable mono(ADP-ribosyl)transferase, it may ADP-ribosylate Arg in target protein(s). Upon expression in yeast cells causes cell death. In Enterococcus faecalis (strain ATCC 700802 / V583), this protein is NAD(+)--arginine ADP-ribosyltransferase EFV.